A 426-amino-acid chain; its full sequence is MKRVVITGLGAVTPLGNGVKTNWRNLIQGKSGIVSLKGFPEYEQIPSKVAGVIPRGKEKEEWNVLDYVDQGKLREVATFTQLALTSAAEALKDARWIDIDEQEKLATGVCFGTGIGNLDDALNENGVLNKAGIRKVSPRVISKILINMPAGYISQRYGFTALNHTTTTACAAGCHAIGDAFNFIKLGHADVIIAGGSESCINPLTVAGFSKARSLSTKFNDNPKAASRPFDANRDGFVIGEGSAALVLEELEHAKNRNAHIYAEIVGYGLASDSYHITAPNPNGDAAYYAMKRSLKQAGLSASQLDYINAHATSTKLGDVAESIAITRLLCDVNRNPEAFPVSSSKGSIGHLLGAAGAIESVYTVLTVQKGVLPPTLNFEYSDIPQQFQCDYVPNVAKESRINVALSNSFGFGGTNASLCFKKFLQ.

Residues 1–18 (MKRVVITGLGAVTPLGNG) constitute a mitochondrion transit peptide. Positions 19-423 (VKTNWRNLIQ…GTNASLCFKK (405 aa)) constitute a Ketosynthase family 3 (KS3) domain. Catalysis depends on for beta-ketoacyl synthase activity residues cysteine 170, histidine 311, and histidine 351.

It belongs to the thiolase-like superfamily. Beta-ketoacyl-ACP synthases family.

The protein localises to the mitochondrion. It catalyses the reaction a fatty acyl-[ACP] + malonyl-[ACP] + H(+) = a 3-oxoacyl-[ACP] + holo-[ACP] + CO2. The enzyme catalyses butanoyl-[ACP] + malonyl-[ACP] + H(+) = 3-oxohexanoyl-[ACP] + holo-[ACP] + CO2. The catalysed reaction is hexanoyl-[ACP] + malonyl-[ACP] + H(+) = 3-oxooctanoyl-[ACP] + holo-[ACP] + CO2. It carries out the reaction octanoyl-[ACP] + malonyl-[ACP] + H(+) = 3-oxodecanoyl-[ACP] + holo-[ACP] + CO2. It catalyses the reaction decanoyl-[ACP] + malonyl-[ACP] + H(+) = 3-oxododecanoyl-[ACP] + holo-[ACP] + CO2. The enzyme catalyses dodecanoyl-[ACP] + malonyl-[ACP] + H(+) = 3-oxotetradecanoyl-[ACP] + holo-[ACP] + CO2. The catalysed reaction is tetradecanoyl-[ACP] + malonyl-[ACP] + H(+) = 3-oxohexadecanoyl-[ACP] + holo-[ACP] + CO2. It participates in lipid metabolism; fatty acid biosynthesis. Functionally, may play a role in the biosynthesis of lipoic acid as well as longer chain fatty acids required for optimal mitochondrial function. This is Putative 3-oxoacyl-[acyl-carrier-protein] synthase, mitochondrial from Schizosaccharomyces pombe (strain 972 / ATCC 24843) (Fission yeast).